The following is a 90-amino-acid chain: Small ribosomal subunit protein bS18 (90 aa).

It belongs to the bacterial ribosomal protein bS18 family. In terms of assembly, part of the 30S ribosomal subunit. Forms a tight heterodimer with protein bS6.

Functionally, binds as a heterodimer with protein bS6 to the central domain of the 16S rRNA, where it helps stabilize the platform of the 30S subunit. This Polynucleobacter asymbioticus (strain DSM 18221 / CIP 109841 / QLW-P1DMWA-1) (Polynucleobacter necessarius subsp. asymbioticus) protein is Small ribosomal subunit protein bS18.